The primary structure comprises 223 residues: Ribonuclease 3 (223 aa).

The RNase III domain occupies 3–125 (LERLQKKLGY…IIAAVYLDAG (123 aa)). Mg(2+) is bound at residue Glu-38. Asp-42 is a catalytic residue. Mg(2+) contacts are provided by Asp-111 and Glu-114. Glu-114 is a catalytic residue. The DRBM domain maps to 152-222 (DPKTRLQEYL…ALQVIKVLGI (71 aa)).

It belongs to the ribonuclease III family. As to quaternary structure, homodimer. Requires Mg(2+) as cofactor.

It is found in the cytoplasm. It catalyses the reaction Endonucleolytic cleavage to 5'-phosphomonoester.. Its function is as follows. Digests double-stranded RNA. Involved in the processing of primary rRNA transcript to yield the immediate precursors to the large and small rRNAs (23S and 16S). Processes some mRNAs, and tRNAs when they are encoded in the rRNA operon. Processes pre-crRNA and tracrRNA of type II CRISPR loci if present in the organism. In Glaesserella parasuis serovar 5 (strain SH0165) (Haemophilus parasuis), this protein is Ribonuclease 3.